We begin with the raw amino-acid sequence, 187 residues long: Orotate phosphoribosyltransferase (187 aa).

5-phospho-alpha-D-ribose 1-diphosphate-binding positions include arginine 98, lysine 99, lysine 102, histidine 104, and glutamate 128–serine 136. Residues threonine 132 and arginine 160 each contribute to the orotate site.

Belongs to the purine/pyrimidine phosphoribosyltransferase family. PyrE subfamily. In terms of assembly, homodimer. The cofactor is Mg(2+).

It carries out the reaction orotidine 5'-phosphate + diphosphate = orotate + 5-phospho-alpha-D-ribose 1-diphosphate. It participates in pyrimidine metabolism; UMP biosynthesis via de novo pathway; UMP from orotate: step 1/2. Functionally, catalyzes the transfer of a ribosyl phosphate group from 5-phosphoribose 1-diphosphate to orotate, leading to the formation of orotidine monophosphate (OMP). This Rhodopseudomonas palustris (strain TIE-1) protein is Orotate phosphoribosyltransferase.